Here is an 88-residue protein sequence, read N- to C-terminus: Sec-independent protein translocase protein TatA (88 aa).

The helical transmembrane segment at 1–21 threads the bilayer; sequence MGGASIWHWIVVGVIVMLLFG. Residues 62–88 form a disordered region; it reads TEPVRTLPPHPTEPAPATHATVDRKVV.

It belongs to the TatA/E family. The Tat system comprises two distinct complexes: a TatABC complex, containing multiple copies of TatA, TatB and TatC subunits, and a separate TatA complex, containing only TatA subunits. Substrates initially bind to the TatABC complex, which probably triggers association of the separate TatA complex to form the active translocon.

It localises to the cell inner membrane. Its function is as follows. Part of the twin-arginine translocation (Tat) system that transports large folded proteins containing a characteristic twin-arginine motif in their signal peptide across membranes. TatA could form the protein-conducting channel of the Tat system. The chain is Sec-independent protein translocase protein TatA from Methylobacterium sp. (strain 4-46).